We begin with the raw amino-acid sequence, 222 residues long: Endonuclease V (222 aa).

Positions 34 and 102 each coordinate Mg(2+).

It belongs to the endonuclease V family. The cofactor is Mg(2+).

The protein localises to the cytoplasm. It carries out the reaction Endonucleolytic cleavage at apurinic or apyrimidinic sites to products with a 5'-phosphate.. Its function is as follows. DNA repair enzyme involved in the repair of deaminated bases. Selectively cleaves double-stranded DNA at the second phosphodiester bond 3' to a deoxyinosine leaving behind the intact lesion on the nicked DNA. The polypeptide is Endonuclease V (Proteus mirabilis (strain HI4320)).